A 404-amino-acid polypeptide reads, in one-letter code: Serine/threonine transporter SstT (404 aa).

A run of 8 helical transmembrane segments spans residues 17–37, 39–59, 75–95, 138–158, 179–199, 212–232, 287–307, and 313–333; these read IGIGVVIGVMLGILAPDLTGF, ILGKLFVGGLKAIAPLLVFAL, MTLIIVLYLFGTFASALVAVL, ALATANYIGVLSWAIIFGLAL, IVVWIINLAPIGIMSLVFTTI, FLILVLVGTMVFVALVVNPLI, IPLGATINMGGAAITINVLTL, and FGIPIDFLTALLLSVVAAVSA.

This sequence belongs to the dicarboxylate/amino acid:cation symporter (DAACS) (TC 2.A.23) family.

The protein localises to the cell membrane. The catalysed reaction is L-serine(in) + Na(+)(in) = L-serine(out) + Na(+)(out). It carries out the reaction L-threonine(in) + Na(+)(in) = L-threonine(out) + Na(+)(out). Its function is as follows. Involved in the import of serine and threonine into the cell, with the concomitant import of sodium (symport system). In Streptococcus pyogenes serotype M12 (strain MGAS2096), this protein is Serine/threonine transporter SstT.